A 158-amino-acid chain; its full sequence is UPF0225 protein Pput_1155 (158 aa).

It belongs to the UPF0225 family.

The protein is UPF0225 protein Pput_1155 of Pseudomonas putida (strain ATCC 700007 / DSM 6899 / JCM 31910 / BCRC 17059 / LMG 24140 / F1).